Consider the following 254-residue polypeptide: Thiazole synthase (254 aa).

The Schiff-base intermediate with DXP role is filled by K95. Residues G156, 182-183 (AG), and 204-205 (NT) contribute to the 1-deoxy-D-xylulose 5-phosphate site.

Belongs to the ThiG family. Homotetramer. Forms heterodimers with either ThiH or ThiS.

Its subcellular location is the cytoplasm. The enzyme catalyses [ThiS sulfur-carrier protein]-C-terminal-Gly-aminoethanethioate + 2-iminoacetate + 1-deoxy-D-xylulose 5-phosphate = [ThiS sulfur-carrier protein]-C-terminal Gly-Gly + 2-[(2R,5Z)-2-carboxy-4-methylthiazol-5(2H)-ylidene]ethyl phosphate + 2 H2O + H(+). The protein operates within cofactor biosynthesis; thiamine diphosphate biosynthesis. Functionally, catalyzes the rearrangement of 1-deoxy-D-xylulose 5-phosphate (DXP) to produce the thiazole phosphate moiety of thiamine. Sulfur is provided by the thiocarboxylate moiety of the carrier protein ThiS. In vitro, sulfur can be provided by H(2)S. The protein is Thiazole synthase of Shewanella sp. (strain W3-18-1).